The primary structure comprises 120 residues: Large ribosomal subunit protein uL18 (120 aa).

Belongs to the universal ribosomal protein uL18 family. In terms of assembly, part of the 50S ribosomal subunit; part of the 5S rRNA/L5/L18/L25 subcomplex. Contacts the 5S and 23S rRNAs.

This is one of the proteins that bind and probably mediate the attachment of the 5S RNA into the large ribosomal subunit, where it forms part of the central protuberance. This is Large ribosomal subunit protein uL18 from Rhizobium meliloti (strain 1021) (Ensifer meliloti).